The following is a 245-amino-acid chain: Ribosomal RNA small subunit methyltransferase G (245 aa).

S-adenosyl-L-methionine-binding positions include Gly-90, Leu-95, 140 to 141 (AE), and Arg-158.

The protein belongs to the methyltransferase superfamily. RNA methyltransferase RsmG family.

It is found in the cytoplasm. Specifically methylates the N7 position of guanine in position 518 of 16S rRNA. The chain is Ribosomal RNA small subunit methyltransferase G from Mycobacterium leprae (strain TN).